The primary structure comprises 438 residues: RNA polymerase sigma factor SigA (438 aa).

The span at 1–11 (MKKSKSKKKAA) shows a compositional bias: basic residues. The segment at 1–69 (MKKSKSKKKA…PLDLEGPLEA (69 aa)) is disordered. The segment covering 12-26 (KAQEVEVKEPVKEPE) has biased composition (basic and acidic residues). Composition is skewed to acidic residues over residues 27 to 45 (PLPELEAAEDLQDLPEPDP) and 52 to 69 (PELEDLADPLDLEGPLEA). A sigma-70 factor domain-1 region spans residues 93-128 (SDPVRQYLHEIGQVPLLTLEEEIDLARKVEEGMEAI). A sigma-70 factor domain-2 region spans residues 202–272 (LIEANLRLVV…NRAIADQART (71 aa)). The Interaction with polymerase core subunit RpoC motif lies at 226 to 229 (DLIQ). Residues 281–359 (ETINKLSRTA…DENLPSPVEA (79 aa)) are sigma-70 factor domain-3. The tract at residues 372 to 424 (ALSKLSEREAMVLKLRKGLIDGREHTLEEVGAYFGVTRERIRQIENKALRKLK) is sigma-70 factor domain-4. The segment at residues 398–417 (LEEVGAYFGVTRERIRQIEN) is a DNA-binding region (H-T-H motif).

This sequence belongs to the sigma-70 factor family. RpoD/SigA subfamily. Interacts transiently with the RNA polymerase catalytic core formed by RpoA, RpoB, RpoC and RpoZ (2 alpha, 1 beta, 1 beta' and 1 omega subunit) to form the RNA polymerase holoenzyme that can initiate transcription.

It localises to the cytoplasm. Its function is as follows. Sigma factors are initiation factors that promote the attachment of RNA polymerase to specific initiation sites and are then released. This sigma factor is the primary sigma factor during exponential growth. The polypeptide is RNA polymerase sigma factor SigA (Thermus aquaticus).